The primary structure comprises 141 residues: HTH-type transcriptional repressor NsrR (141 aa).

One can recognise an HTH rrf2-type domain in the interval 2 to 129 (QLTSFTDYGL…DNYTLADLVE (128 aa)). Residues 28–51 (ISEVTDVYGVSRNHMVKIINQLSR) constitute a DNA-binding region (H-T-H motif). [2Fe-2S] cluster is bound by residues cysteine 91, cysteine 96, and cysteine 102.

It depends on [2Fe-2S] cluster as a cofactor.

Its function is as follows. Nitric oxide-sensitive repressor of genes involved in protecting the cell against nitrosative stress. May require iron for activity. The chain is HTH-type transcriptional repressor NsrR from Escherichia coli O127:H6 (strain E2348/69 / EPEC).